Here is a 621-residue protein sequence, read N- to C-terminus: UvrABC system protein C (621 aa).

In terms of domain architecture, GIY-YIG spans 20 to 98 (TAPGVYRMYA…IKSLTPRYNV (79 aa)). A UVR domain is found at 207–242 (DLLAEELIQAMQVASEHLEFEQAARLRDLLTSLRSM).

The protein belongs to the UvrC family. Interacts with UvrB in an incision complex.

It is found in the cytoplasm. In terms of biological role, the UvrABC repair system catalyzes the recognition and processing of DNA lesions. UvrC both incises the 5' and 3' sides of the lesion. The N-terminal half is responsible for the 3' incision and the C-terminal half is responsible for the 5' incision. This chain is UvrABC system protein C, found in Xylella fastidiosa (strain M23).